Reading from the N-terminus, the 336-residue chain is Mitochondrial thiamine diphosphate carrier 2 (336 aa).

6 helical membrane-spanning segments follow: residues 11–27 (RRALVDSLAGAISGGIS), 88–105 (VPALLMYMPYTAIQFTVL), 127–150 (YLSYVSGALAGCAATIGSYPFDLL), 182–199 (LYSGLSPTLVEIIPYAGL), 230–246 (SVSSFQLFLCGFAAGTF), and 303–322 (GLFPSLVKSAPAGAVTFVAY). 3 Solcar repeats span residues 11 to 111 (RRAL…LKTF), 124 to 210 (LSPY…FKRS), and 231 to 328 (VSSF…ISDW).

Belongs to the mitochondrial carrier (TC 2.A.29) family. As to expression, ubiquitous.

The protein resides in the mitochondrion inner membrane. Mitochondrial transporter that mediates uptake of thiamine diphosphate (ThDP) into mitochondria. This chain is Mitochondrial thiamine diphosphate carrier 2, found in Zea mays (Maize).